The primary structure comprises 319 residues: Ribose-phosphate pyrophosphokinase (319 aa).

Residues 41–43 and 100–101 contribute to the ATP site; these read NGE and RQ. Mg(2+)-binding residues include H134 and D175. The active site involves K198. D-ribose 5-phosphate is bound by residues R200, D224, and 228–232; that span reads DTAGS.

This sequence belongs to the ribose-phosphate pyrophosphokinase family. Class I subfamily. In terms of assembly, homohexamer. Requires Mg(2+) as cofactor.

The protein localises to the cytoplasm. The enzyme catalyses D-ribose 5-phosphate + ATP = 5-phospho-alpha-D-ribose 1-diphosphate + AMP + H(+). Its pathway is metabolic intermediate biosynthesis; 5-phospho-alpha-D-ribose 1-diphosphate biosynthesis; 5-phospho-alpha-D-ribose 1-diphosphate from D-ribose 5-phosphate (route I): step 1/1. Functionally, involved in the biosynthesis of the central metabolite phospho-alpha-D-ribosyl-1-pyrophosphate (PRPP) via the transfer of pyrophosphoryl group from ATP to 1-hydroxyl of ribose-5-phosphate (Rib-5-P). The chain is Ribose-phosphate pyrophosphokinase from Clostridium acetobutylicum (strain ATCC 824 / DSM 792 / JCM 1419 / IAM 19013 / LMG 5710 / NBRC 13948 / NRRL B-527 / VKM B-1787 / 2291 / W).